Consider the following 257-residue polypeptide: Snake venom serine protease KN10 (257 aa).

An N-terminal signal peptide occupies residues 1–18 (MVLIRVLANLLILQLSYA). Residues 19–24 (QKSSEL) constitute a propeptide that is removed on maturation. Positions 25 to 248 (VVGGDECNIN…HLDWIKSIIA (224 aa)) constitute a Peptidase S1 domain. 5 disulfides stabilise this stretch: Cys-31-Cys-162, Cys-49-Cys-65, Cys-141-Cys-209, Cys-173-Cys-188, and Cys-199-Cys-224. His-64 serves as the catalytic Charge relay system. An N-linked (GlcNAc...) asparagine glycan is attached at Asn-102. The Charge relay system role is filled by Asp-109. 2 N-linked (GlcNAc...) asparagine glycosylation sites follow: Asn-120 and Asn-121. Ser-203 serves as the catalytic Charge relay system.

The protein belongs to the peptidase S1 family. Snake venom subfamily. Monomer. In terms of tissue distribution, expressed by the venom gland.

The protein localises to the secreted. In terms of biological role, snake venom serine protease that may act in the hemostasis system of the prey. This chain is Snake venom serine protease KN10, found in Trimeresurus stejnegeri (Chinese green tree viper).